A 326-amino-acid chain; its full sequence is Vitamin B12 import system permease protein BtuC (326 aa).

The next 9 membrane-spanning stretches (helical) occupy residues 15 to 35 (WLLC…CAGE), 61 to 81 (LAVL…QALF), 88 to 108 (PGLL…VLLG), 112 to 132 (LPNW…TLIL), 146 to 166 (LLAG…AIYF), 184 to 204 (GGVD…LLWI), 240 to 260 (GWMV…GLVI), 274 to 294 (VLLP…DIVA), and 302 to 322 (ELPI…WLLL).

It belongs to the binding-protein-dependent transport system permease family. FecCD subfamily. As to quaternary structure, the complex is composed of two ATP-binding proteins (BtuD), two transmembrane proteins (BtuC) and a solute-binding protein (BtuF).

Its subcellular location is the cell inner membrane. Functionally, part of the ABC transporter complex BtuCDF involved in vitamin B12 import. Involved in the translocation of the substrate across the membrane. In Shigella boydii serotype 18 (strain CDC 3083-94 / BS512), this protein is Vitamin B12 import system permease protein BtuC.